The primary structure comprises 434 residues: Exopolygalacturonase X-1 (434 aa).

The N-terminal stretch at 1–22 is a signal peptide; that stretch reads MKLSHLLTSAVSVLSLGLTVEG. Residues asparagine 113, asparagine 129, and asparagine 199 are each glycosylated (N-linked (GlcNAc...) asparagine). One copy of the PbH1 1 repeat lies at 231-252; it reads SKNIVIQNSVINNGDDCVSFKP. Aspartate 245 acts as the Proton donor in catalysis. Cysteine 247 and cysteine 264 are disulfide-bonded. Residues asparagine 253 and asparagine 265 are each glycosylated (N-linked (GlcNAc...) asparagine). The stretch at 254–274 is one PbH1 2 repeat; that stretch reads STEILVQNLYCNGSHGISVGS. The active site involves histidine 268. Asparagine 292, asparagine 297, asparagine 329, asparagine 354, and asparagine 364 each carry an N-linked (GlcNAc...) asparagine glycan. A PbH1 3 repeat occupies 327–348; sequence VSNITYEDMYIENVDWAIEITQ. The stretch at 362–405 is one PbH1 4 repeat; it reads PSNLTISDVYISNMYGTTSSARDPNIGTIVCSSPDVCSNIYVEN. A disulfide bond links cysteine 392 and cysteine 398. N-linked (GlcNAc...) asparagine glycosylation is found at asparagine 423 and asparagine 430.

This sequence belongs to the glycosyl hydrolase 28 family.

The protein resides in the secreted. The catalysed reaction is [(1-&gt;4)-alpha-D-galacturonosyl](n) + H2O = alpha-D-galacturonate + [(1-&gt;4)-alpha-D-galacturonosyl](n-1). Functionally, specific in hydrolyzing the terminal glycosidic bond of polygalacturonic acid and oligogalacturonates. The chain is Exopolygalacturonase X-1 (pgaX-1) from Emericella nidulans (strain FGSC A4 / ATCC 38163 / CBS 112.46 / NRRL 194 / M139) (Aspergillus nidulans).